The primary structure comprises 293 residues: Methylsterol monooxygenase 1 (293 aa).

2 consecutive transmembrane segments (helical) span residues 55 to 75 and 100 to 120; these read LIVHEALYFFFCLPGFLFQFI and VLLFNHFCIQFPLICGTYYFT. The 130-residue stretch at 145 to 274 folds into the Fatty acid hydroxylase domain; the sequence is CAVIEDTWHY…FTWWDRIFGT (130 aa). The Histidine box-1 motif lies at 157 to 161; it reads HRLLH. Positions 170–174 match the Histidine box-2 motif; that stretch reads HKIHH. The helical transmembrane segment at 199-219 threads the bilayer; sequence FFIGIMLLCDHVILLWAWVTV. The short motif at 249–255 is the Histidine box-3 element; that stretch reads HHDFHHM.

It belongs to the sterol desaturase family. Fe cation serves as cofactor. Ubiquitinated by MARCHF6, leading to proteasomal degradation.

The protein localises to the endoplasmic reticulum membrane. The enzyme catalyses 4,4-dimethyl-5alpha-cholest-7-en-3beta-ol + 6 Fe(II)-[cytochrome b5] + 3 O2 + 5 H(+) = 4alpha-carboxy-4beta-methyl-5alpha-cholest-7-ene-3beta-ol + 6 Fe(III)-[cytochrome b5] + 4 H2O. It catalyses the reaction 4,4-dimethyl-5alpha-cholesta-8,24-dien-3beta-ol + 6 Fe(II)-[cytochrome b5] + 3 O2 + 5 H(+) = 4beta-methylzymosterol-4alpha-carboxylate + 6 Fe(III)-[cytochrome b5] + 4 H2O. The catalysed reaction is 4alpha-methylzymosterol + 6 Fe(II)-[cytochrome b5] + 3 O2 + 5 H(+) = 4alpha-carboxyzymosterol + 6 Fe(III)-[cytochrome b5] + 4 H2O. It carries out the reaction 4alpha-methyl-5alpha-cholest-7-en-3beta-ol + 6 Fe(II)-[cytochrome b5] + 3 O2 + 5 H(+) = 4alpha-carboxy-5alpha-cholest-7-en-3beta-ol + 6 Fe(III)-[cytochrome b5] + 4 H2O. The enzyme catalyses 4,4-dimethyl-5alpha-cholest-8-en-3beta-ol + 6 Fe(II)-[cytochrome b5] + 3 O2 + 5 H(+) = 4alpha-carboxy-4beta-methyl-5alpha-cholest-8-en-3beta-ol + 6 Fe(III)-[cytochrome b5] + 4 H2O. It catalyses the reaction 4alpha-methyl-5alpha-cholest-8-en-3beta-ol + 6 Fe(II)-[cytochrome b5] + 3 O2 + 5 H(+) = 4alpha-carboxy-5alpha-cholest-8-ene-3beta-ol + 6 Fe(III)-[cytochrome b5] + 4 H2O. Its pathway is steroid biosynthesis; zymosterol biosynthesis; zymosterol from lanosterol: step 3/6. It participates in steroid biosynthesis; cholesterol biosynthesis. In terms of biological role, catalyzes the three-step monooxygenation required for the demethylation of 4,4-dimethyl and 4alpha-methylsterols, which can be subsequently metabolized to cholesterol. The chain is Methylsterol monooxygenase 1 (MSMO1) from Sus scrofa (Pig).